The sequence spans 478 residues: Pyruvate kinase (478 aa).

R35 lines the substrate pocket. K(+) contacts are provided by N37, S39, and D69. Residue 37–40 (NMSH) participates in ATP binding. ATP-binding residues include R76 and K157. Residue E219 coordinates Mg(2+). Residues G242, D243, and T275 each coordinate substrate. D243 contacts Mg(2+).

The protein belongs to the pyruvate kinase family. As to quaternary structure, homotetramer. Requires Mg(2+) as cofactor. K(+) is required as a cofactor.

It carries out the reaction pyruvate + ATP = phosphoenolpyruvate + ADP + H(+). It functions in the pathway carbohydrate degradation; glycolysis; pyruvate from D-glyceraldehyde 3-phosphate: step 5/5. In Methylorubrum extorquens (strain ATCC 14718 / DSM 1338 / JCM 2805 / NCIMB 9133 / AM1) (Methylobacterium extorquens), this protein is Pyruvate kinase (pyk).